Here is a 240-residue protein sequence, read N- to C-terminus: Phosducin-like protein 3 (240 aa).

An N-acetylmethionine modification is found at M1. The Phosducin domain maps to 27-181 (KELEEEEAEK…EGDIKAQFIG (155 aa)). A phosphoserine mark is found at S44, S65, S235, and S237. A thioredoxin fold region spans residues 92–240 (FGEVLEISGK…MRRDSDSEDD (149 aa)).

It belongs to the phosducin family. Interacts (via thioredoxin fold region) with KDR/VEGFR2 (via juxtamembrane domain). Forms ternary complexes with the chaperonin CCT complex and actin substrate, leading to inhibition of actin folding. Interacts with XIAP (via BIR 3 and RING domain). Interacts with HSP90AA1 and HSP90AB1. N-terminal methionine acetylation destabilizes the protein. In terms of tissue distribution, expressed in blood vessels (at protein level).

Its subcellular location is the cytoplasm. The protein resides in the perinuclear region. It is found in the endoplasmic reticulum. In terms of biological role, acts as a chaperone for the angiogenic VEGF receptor KDR/VEGFR2, increasing its abundance by inhibiting its ubiquitination and degradation. Inhibits the folding activity of the chaperonin-containing T-complex (CCT) which leads to inhibition of cytoskeletal actin folding. Acts as a chaperone during heat shock alongside HSP90 and HSP40/70 chaperone complexes. Modulates the activation of caspases during apoptosis. This Mus musculus (Mouse) protein is Phosducin-like protein 3 (Pdcl3).